We begin with the raw amino-acid sequence, 354 residues long: Uroporphyrinogen decarboxylase (354 aa).

Substrate is bound by residues 27–31 (RQAGR), Asp-77, Tyr-154, Thr-209, and His-327.

The protein belongs to the uroporphyrinogen decarboxylase family. Homodimer.

The protein localises to the cytoplasm. It carries out the reaction uroporphyrinogen III + 4 H(+) = coproporphyrinogen III + 4 CO2. The protein operates within porphyrin-containing compound metabolism; protoporphyrin-IX biosynthesis; coproporphyrinogen-III from 5-aminolevulinate: step 4/4. Functionally, catalyzes the decarboxylation of four acetate groups of uroporphyrinogen-III to yield coproporphyrinogen-III. The sequence is that of Uroporphyrinogen decarboxylase from Klebsiella pneumoniae (strain 342).